Here is a 464-residue protein sequence, read N- to C-terminus: Argininosuccinate lyase (464 aa).

Belongs to the lyase 1 family. Argininosuccinate lyase subfamily.

The protein resides in the cytoplasm. The catalysed reaction is 2-(N(omega)-L-arginino)succinate = fumarate + L-arginine. It functions in the pathway amino-acid biosynthesis; L-arginine biosynthesis; L-arginine from L-ornithine and carbamoyl phosphate: step 3/3. The sequence is that of Argininosuccinate lyase from Pseudomonas fluorescens (strain ATCC BAA-477 / NRRL B-23932 / Pf-5).